Reading from the N-terminus, the 380-residue chain is Flap endonuclease 1-A (380 aa).

An N-domain region spans residues Met-1–Arg-105. Position 34 (Asp-34) interacts with Mg(2+). Residue Arg-71 participates in DNA binding. Mg(2+) contacts are provided by Asp-87, Glu-159, Glu-161, Asp-180, and Asp-182. Residues Ala-123–His-254 are I-domain. Glu-159 serves as a coordination point for DNA. DNA contacts are provided by Gly-232 and Asp-234. Position 234 (Asp-234) interacts with Mg(2+). The segment at Ser-336–Phe-344 is interaction with PCNA. The disordered stretch occupies residues Ser-351 to Lys-380. Basic and acidic residues predominate over residues Lys-355 to Ser-364. A compositionally biased stretch (basic residues) spans Lys-371–Lys-380.

This sequence belongs to the XPG/RAD2 endonuclease family. FEN1 subfamily. As to quaternary structure, interacts with PCNA. Three molecules of FEN1 bind to one PCNA trimer with each molecule binding to one PCNA monomer. PCNA stimulates the nuclease activity without altering cleavage specificity. Mg(2+) is required as a cofactor. Phosphorylated. Phosphorylation upon DNA damage induces relocalization to the nuclear plasma.

Its subcellular location is the nucleus. The protein resides in the nucleolus. It is found in the nucleoplasm. The protein localises to the mitochondrion. Structure-specific nuclease with 5'-flap endonuclease and 5'-3' exonuclease activities involved in DNA replication and repair. During DNA replication, cleaves the 5'-overhanging flap structure that is generated by displacement synthesis when DNA polymerase encounters the 5'-end of a downstream Okazaki fragment. It enters the flap from the 5'-end and then tracks to cleave the flap base, leaving a nick for ligation. Also involved in the long patch base excision repair (LP-BER) pathway, by cleaving within the apurinic/apyrimidinic (AP) site-terminated flap. Acts as a genome stabilization factor that prevents flaps from equilibrating into structures that lead to duplications and deletions. Also possesses 5'-3' exonuclease activity on nicked or gapped double-stranded DNA, and exhibits RNase H activity. Also involved in replication and repair of rDNA and in repairing mitochondrial DNA. This is Flap endonuclease 1-A from Sorghum bicolor (Sorghum).